Consider the following 150-residue polypeptide: MKLILTANVDNLGVPGDIVEVKAGYGRNYLLPRGYAIVATRGAEKQIEGIKRAQEARQIRDLDHAREVKEELENLSGVTISVRTAESGKMFGSVTADNIVDAVKKANGRSLDKHSIKLRKGDVKATGVYSVDVQLHEGIVASLSFEVVSA.

Belongs to the bacterial ribosomal protein bL9 family.

Functionally, binds to the 23S rRNA. The sequence is that of Large ribosomal subunit protein bL9 from Corynebacterium jeikeium (strain K411).